The sequence spans 121 residues: Ribonuclease P protein component (121 aa).

This sequence belongs to the RnpA family. In terms of assembly, consists of a catalytic RNA component (M1 or rnpB) and a protein subunit.

The catalysed reaction is Endonucleolytic cleavage of RNA, removing 5'-extranucleotides from tRNA precursor.. RNaseP catalyzes the removal of the 5'-leader sequence from pre-tRNA to produce the mature 5'-terminus. It can also cleave other RNA substrates such as 4.5S RNA. The protein component plays an auxiliary but essential role in vivo by binding to the 5'-leader sequence and broadening the substrate specificity of the ribozyme. The sequence is that of Ribonuclease P protein component from Coxiella burnetii (strain Dugway 5J108-111).